The chain runs to 344 residues: Heat-inducible transcription repressor HrcA (344 aa).

It belongs to the HrcA family.

Its function is as follows. Negative regulator of class I heat shock genes (grpE-dnaK-dnaJ and groELS operons). Prevents heat-shock induction of these operons. This chain is Heat-inducible transcription repressor HrcA, found in Streptococcus pyogenes serotype M6 (strain ATCC BAA-946 / MGAS10394).